Reading from the N-terminus, the 235-residue chain is Small ribosomal subunit protein uS3 (235 aa).

Residues 39–107 (IREFIKEECK…ELHLNIVEVR (69 aa)) form the KH type-2 domain. A disordered region spans residues 213–235 (QARDRKAQELQDGPAPRGAGGRR).

The protein belongs to the universal ribosomal protein uS3 family. Part of the 30S ribosomal subunit. Forms a tight complex with proteins S10 and S14.

Binds the lower part of the 30S subunit head. Binds mRNA in the 70S ribosome, positioning it for translation. In Ruegeria pomeroyi (strain ATCC 700808 / DSM 15171 / DSS-3) (Silicibacter pomeroyi), this protein is Small ribosomal subunit protein uS3.